Reading from the N-terminus, the 203-residue chain is ADP-ribosylation factor-like protein 6-interacting protein 1 (203 aa).

Residues 1 to 41 (MAEGDNRSTNLLAAETASLEEQLQGWGEVMLMADKVLRWER) lie on the Cytoplasmic side of the membrane. The chain crosses the membrane as a helical span at residues 42–62 (AWFPPAIMGVVSLVFLIIYYL). Over 63 to 65 (DPS) the chain is Lumenal. Residues 66–86 (VLSGVSCFVMFLCLADYLVPI) traverse the membrane as a helical segment. Residues 87–133 (LAPRIFGSNKWTTEQQQRFHEICSNLVKTRRRAVGWWKRLFTLKEEK) lie on the Cytoplasmic side of the membrane. Residues 134 to 175 (PKMYFMTMIVSLAAVAWVGQQVHNLLLTYLIVTSLLLLPGLN) traverse the membrane as a helical segment. The Lumenal segment spans residues 176–203 (QHGIILKYIGMAKREINKLLKQKEKKNE).

Belongs to the ARL6ip family. As to quaternary structure, homooligomer. Heterodimer with ARL6IP5. Interacts with ARL6. Interacts with TMEM33. Interacts with ATL1. Expressed in all hematopoietic cell lineages, but the highest level of expression is found in early myeloid progenitor cells. Expressed in brain, bone marrow, thymus and lung. Expressed at low level in liver, kidney and spleen. Not detected in heart.

It localises to the endomembrane system. It is found in the endoplasmic reticulum membrane. The protein localises to the endoplasmic reticulum. Its function is as follows. Positively regulates SLC1A1/EAAC1-mediated glutamate transport by increasing its affinity for glutamate in a PKC activity-dependent manner. Promotes the catalytic efficiency of SLC1A1/EAAC1 probably by reducing its interaction with ARL6IP5, a negative regulator of SLC1A1/EAAC1-mediated glutamate transport. Plays a role in the formation and stabilization of endoplasmic reticulum tubules. Negatively regulates apoptosis, possibly by modulating the activity of caspase-9 (CASP9). Inhibits cleavage of CASP9-dependent substrates and downstream markers of apoptosis but not CASP9 itself. May be involved in protein transport, membrane trafficking, or cell signaling during hematopoietic maturation. This chain is ADP-ribosylation factor-like protein 6-interacting protein 1 (ARL6IP1), found in Homo sapiens (Human).